A 107-amino-acid chain; its full sequence is Late embryogenesis abundant protein M10 (107 aa).

The first 19 residues, methionine 1–alanine 19, serve as a signal peptide directing secretion.

Its function is as follows. May be involved in the acquisition of desiccation tolerance during late phase of embryogenesis. The protein is Late embryogenesis abundant protein M10 of Arabidopsis thaliana (Mouse-ear cress).